A 683-amino-acid chain; its full sequence is E3 ubiquitin-protein ligase WAVH1 (683 aa).

The RING-type; atypical zinc-finger motif lies at 130–176 (CGICLQSVKSGQGTAIFTAECSHTFHFPCVTSRAAANHNRLASCPVC). The VWFA domain maps to 302 to 438 (DLVAVLDVSG…AHSRIPIHTI (137 aa)).

In terms of tissue distribution, expressed in root tips and leaf primordia.

It catalyses the reaction S-ubiquitinyl-[E2 ubiquitin-conjugating enzyme]-L-cysteine + [acceptor protein]-L-lysine = [E2 ubiquitin-conjugating enzyme]-L-cysteine + N(6)-ubiquitinyl-[acceptor protein]-L-lysine.. E3 ubiquitin-protein ligase involved in the regulation of root growth. Acts as a positive regulator of root gravitropism. Possesses E3 protein ligase activity in vitro. This chain is E3 ubiquitin-protein ligase WAVH1, found in Arabidopsis thaliana (Mouse-ear cress).